Reading from the N-terminus, the 325-residue chain is Protein UL76 (325 aa).

Positions 222–286 are disordered; it reads ARASAVAGGR…VRGGGAVEPA (65 aa). The segment covering 247-258 has biased composition (low complexity); that stretch reads GPGAQTVSASGA.

It belongs to the herpesviridae UL24 family.

It is found in the virion. It localises to the host cytoplasm. The protein localises to the host nucleus. Its subcellular location is the host nucleolus. The protein resides in the host Golgi apparatus. In terms of biological role, may participate in nuclear egress of viral particles. Plays a role in the dispersal of several host nucleolar proteins including NCL/nucleolin and NPM1. Since deletion of host NCL/nucleolin negatively impact on nuclear egress, UL76 supposedly acts on this process through its effect on host nucleoli. Induces cell cycle arrest in host cells at the G2/M phase following by apoptosis. The mechanism involves the inhibition of host mitotic complex cyclinB/CDK1. In Human cytomegalovirus (strain Merlin) (HHV-5), this protein is Protein UL76 (UL76).